The chain runs to 160 residues: Transcription elongation factor GreA (160 aa).

The stretch at 1–72 (MAEKTYPMTL…QISSLETKIR (72 aa)) forms a coiled coil.

Belongs to the GreA/GreB family.

In terms of biological role, necessary for efficient RNA polymerase transcription elongation past template-encoded arresting sites. The arresting sites in DNA have the property of trapping a certain fraction of elongating RNA polymerases that pass through, resulting in locked ternary complexes. Cleavage of the nascent transcript by cleavage factors such as GreA or GreB allows the resumption of elongation from the new 3'terminus. GreA releases sequences of 2 to 3 nucleotides. This Streptococcus pneumoniae (strain Hungary19A-6) protein is Transcription elongation factor GreA.